We begin with the raw amino-acid sequence, 290 residues long: L-proline cis-3-hydroxylase 1 (290 aa).

Residues His107, Asp109, and His158 each contribute to the Fe cation site. A 2-oxoglutarate-binding site is contributed by Arg168.

It belongs to the L-proline cis-4-/cis-3-hydroxylase family. In terms of assembly, homodimer. The cofactor is Fe(2+).

The enzyme catalyses L-proline + 2-oxoglutarate + O2 = cis-3-hydroxy-L-proline + succinate + CO2. Its activity is regulated as follows. Inhibited by metal ions such as Co(2+), Zn(2+), Ni(2+) or Cu(2+). Is also inhibited by EDTA in vitro. Unlike the procollagen-proline cis-3- and trans-4-hydroxylases from mammals, does not necessarily require L-ascorbate for activity although it does increase the activity of the enzyme. In terms of biological role, dioxygenase that catalyzes the 2-oxoglutarate-dependent selective hydroxylation of free L-proline to cis-3-hydroxy-L-proline (cis-3-Hyp). D-proline, trans-4-hydroxy-L-proline, cis-4-hydroxy-L-proline, cis-4-hydroxy-D-proline, and 3,4-dehydro-DL-proline are not substrates. The sequence is that of L-proline cis-3-hydroxylase 1 from Streptomyces sp.